We begin with the raw amino-acid sequence, 380 residues long: MGYDLPPLREPDLPRTAKVRPVALRTGWTTGACATAAAKAALTALVTGVAPAEVEIGLPAGRRVRFPVARCDRRDEGAEAVVVKDAGDDPDVTHGAELTATVGWRPVPGLALEGGPGVGTVTKPGLGLAVGGPAINDTPRRMIGEAVAEVVDLTAVGVRVVISVPRGEIMARKTTNRRLGIVGGISILGTTGIVRPFSTASWRASVVQAVQVAAAQGERTVVLCTGGRTERGARALLPELPEVCFVEVGDFTGAAVTAAVTHGLSGVAFVGMAGKLAKLAAGVLMTHYTRSKVDLSLLGAVTAEAGGTADLATAVTAANTGRHAYELWEAAGLLGPAGDLLCSRVRAVLRRFAGDAVAVDVAMVDFTGARVVASSGRWAR.

It belongs to the CbiD family.

It carries out the reaction Co-precorrin-5B + S-adenosyl-L-methionine = Co-precorrin-6A + S-adenosyl-L-homocysteine. The protein operates within cofactor biosynthesis; adenosylcobalamin biosynthesis; cob(II)yrinate a,c-diamide from sirohydrochlorin (anaerobic route): step 6/10. Catalyzes the methylation of C-1 in cobalt-precorrin-5B to form cobalt-precorrin-6A. The sequence is that of Cobalt-precorrin-5B C(1)-methyltransferase from Salinispora arenicola (strain CNS-205).